The following is a 340-amino-acid chain: UDP-3-O-acylglucosamine N-acyltransferase (340 aa).

His238 serves as the catalytic Proton acceptor.

It belongs to the transferase hexapeptide repeat family. LpxD subfamily. In terms of assembly, homotrimer.

It catalyses the reaction a UDP-3-O-[(3R)-3-hydroxyacyl]-alpha-D-glucosamine + a (3R)-hydroxyacyl-[ACP] = a UDP-2-N,3-O-bis[(3R)-3-hydroxyacyl]-alpha-D-glucosamine + holo-[ACP] + H(+). Its pathway is bacterial outer membrane biogenesis; LPS lipid A biosynthesis. In terms of biological role, catalyzes the N-acylation of UDP-3-O-acylglucosamine using 3-hydroxyacyl-ACP as the acyl donor. Is involved in the biosynthesis of lipid A, a phosphorylated glycolipid that anchors the lipopolysaccharide to the outer membrane of the cell. This Shewanella denitrificans (strain OS217 / ATCC BAA-1090 / DSM 15013) protein is UDP-3-O-acylglucosamine N-acyltransferase.